A 29-amino-acid polypeptide reads, in one-letter code: Cycloviolacin-H2 (29 aa).

The cyclopeptide (Ser-Asn) cross-link spans 1-29 (SAIACGESCVYIPCFIPGCSCRNRVCYLN). Cystine bridges form between Cys-5-Cys-19, Cys-9-Cys-21, and Cys-14-Cys-26.

In terms of processing, this is a cyclic peptide.

Its function is as follows. Probably participates in a plant defense mechanism. The protein is Cycloviolacin-H2 of Viola hederacea (Australian violet).